Reading from the N-terminus, the 382-residue chain is MRALAYFKKGDIHFTNDIPRPEIQTDDEVIIDVSWCGICGSDLHEYLDGPIFMPKDGECHKLSNAALPLAMGHEMSGIVSKVGPKVTKVKVGDHVVVDAASSCADLHCWPHSKFYNSKPCDACQRGSENLCTHAGFVGLGVISGGFAEQVVVSQHHIIPVPKEIPLDVAALVEPLSVTWHAVKISGFKKGSSALVLGAGPIGLCTILVLKGMGASKIVVSEIAERRIEMAKKLGVEVFNPSKHGHKSIEILRGLTKSHDGFDYSYDCSGIQVTFETSLKALTFKGTATNIAVWGPKPVPFQPMDVTLQEKVMTGSIGYVVEDFEEVVRAIHNGDIAMEDCKQLITGKQRIEDGWEKGFQELMDHKESNVKILLTPNNHGEMK.

Residue C39 participates in Zn(2+) binding. Position 63 is a phosphoserine (S63). Residues H73, C103, C120, C123, C131, and E173 each coordinate Zn(2+).

It belongs to the zinc-containing alcohol dehydrogenase family. Homodimer. It depends on Zn(2+) as a cofactor.

Its subcellular location is the cytoplasm. It catalyses the reaction (R,R)-butane-2,3-diol + NAD(+) = (R)-acetoin + NADH + H(+). In terms of biological role, NAD-dependent (R,R)-butanediol dehydrogenase which catalyzes oxidation of (R,R)-butane-2,3-diol to (3R)-acetoin, of meso-butanediol to (3S)-acetoin, and reduction of acetoin. Allows the use of 2,3-butanediol as an aerobic carbon source. The sequence is that of (R,R)-butanediol dehydrogenase (BDH1) from Saccharomyces cerevisiae (strain ATCC 204508 / S288c) (Baker's yeast).